The chain runs to 434 residues: Enolase (434 aa).

Q163 lines the (2R)-2-phosphoglycerate pocket. The Proton donor role is filled by E205. Mg(2+) contacts are provided by D242, E289, and D316. Positions 341, 370, 371, and 392 each coordinate (2R)-2-phosphoglycerate. K341 (proton acceptor) is an active-site residue.

This sequence belongs to the enolase family. It depends on Mg(2+) as a cofactor.

It is found in the cytoplasm. Its subcellular location is the secreted. The protein localises to the cell surface. The catalysed reaction is (2R)-2-phosphoglycerate = phosphoenolpyruvate + H2O. It participates in carbohydrate degradation; glycolysis; pyruvate from D-glyceraldehyde 3-phosphate: step 4/5. In terms of biological role, catalyzes the reversible conversion of 2-phosphoglycerate (2-PG) into phosphoenolpyruvate (PEP). It is essential for the degradation of carbohydrates via glycolysis. The polypeptide is Enolase (Lacticaseibacillus paracasei (strain ATCC 334 / BCRC 17002 / CCUG 31169 / CIP 107868 / KCTC 3260 / NRRL B-441) (Lactobacillus paracasei)).